A 245-amino-acid chain; its full sequence is Sugar fermentation stimulation protein homolog (245 aa).

It belongs to the SfsA family.

The sequence is that of Sugar fermentation stimulation protein homolog from Yersinia pseudotuberculosis serotype I (strain IP32953).